A 200-amino-acid chain; its full sequence is dITP/XTP pyrophosphatase (200 aa).

Substrate is bound at residue 8-13 (TGNQGK). The Proton acceptor role is filled by aspartate 69. Aspartate 69 provides a ligand contact to Mg(2+). Substrate contacts are provided by residues serine 70, 154–157 (FGYD), lysine 177, and 182–183 (HR).

Belongs to the HAM1 NTPase family. In terms of assembly, homodimer. Requires Mg(2+) as cofactor.

The enzyme catalyses XTP + H2O = XMP + diphosphate + H(+). It carries out the reaction dITP + H2O = dIMP + diphosphate + H(+). It catalyses the reaction ITP + H2O = IMP + diphosphate + H(+). Its function is as follows. Pyrophosphatase that catalyzes the hydrolysis of nucleoside triphosphates to their monophosphate derivatives, with a high preference for the non-canonical purine nucleotides XTP (xanthosine triphosphate), dITP (deoxyinosine triphosphate) and ITP. Seems to function as a house-cleaning enzyme that removes non-canonical purine nucleotides from the nucleotide pool, thus preventing their incorporation into DNA/RNA and avoiding chromosomal lesions. This Vibrio parahaemolyticus serotype O3:K6 (strain RIMD 2210633) protein is dITP/XTP pyrophosphatase.